The following is a 449-amino-acid chain: Bifunctional protein GlmU (449 aa).

Residues 1–229 (MKLSAVILAA…EEDIYGINDR (229 aa)) are pyrophosphorylase. Residues 8–11 (LAAG), Lys22, Gln73, and 78–79 (GT) contribute to the UDP-N-acetyl-alpha-D-glucosamine site. Asp102 serves as a coordination point for Mg(2+). 4 residues coordinate UDP-N-acetyl-alpha-D-glucosamine: Gly139, Glu154, Asn169, and Asn227. Asn227 contributes to the Mg(2+) binding site. Residues 230 to 250 (VQLAQAENILRQRKNRELMLS) are linker. The segment at 251 to 449 (GVSLMDPAST…AGQKHLPRKG (199 aa)) is N-acetyltransferase. UDP-N-acetyl-alpha-D-glucosamine contacts are provided by Arg332 and Lys350. His362 serves as the catalytic Proton acceptor. Residues Tyr365 and Asn376 each contribute to the UDP-N-acetyl-alpha-D-glucosamine site. Acetyl-CoA is bound by residues Ala379, 385-386 (NY), Ser404, Ala422, and Arg439.

This sequence in the N-terminal section; belongs to the N-acetylglucosamine-1-phosphate uridyltransferase family. In the C-terminal section; belongs to the transferase hexapeptide repeat family. In terms of assembly, homotrimer. Mg(2+) serves as cofactor.

It is found in the cytoplasm. The enzyme catalyses alpha-D-glucosamine 1-phosphate + acetyl-CoA = N-acetyl-alpha-D-glucosamine 1-phosphate + CoA + H(+). It carries out the reaction N-acetyl-alpha-D-glucosamine 1-phosphate + UTP + H(+) = UDP-N-acetyl-alpha-D-glucosamine + diphosphate. Its pathway is nucleotide-sugar biosynthesis; UDP-N-acetyl-alpha-D-glucosamine biosynthesis; N-acetyl-alpha-D-glucosamine 1-phosphate from alpha-D-glucosamine 6-phosphate (route II): step 2/2. It functions in the pathway nucleotide-sugar biosynthesis; UDP-N-acetyl-alpha-D-glucosamine biosynthesis; UDP-N-acetyl-alpha-D-glucosamine from N-acetyl-alpha-D-glucosamine 1-phosphate: step 1/1. It participates in bacterial outer membrane biogenesis; LPS lipid A biosynthesis. Its function is as follows. Catalyzes the last two sequential reactions in the de novo biosynthetic pathway for UDP-N-acetylglucosamine (UDP-GlcNAc). The C-terminal domain catalyzes the transfer of acetyl group from acetyl coenzyme A to glucosamine-1-phosphate (GlcN-1-P) to produce N-acetylglucosamine-1-phosphate (GlcNAc-1-P), which is converted into UDP-GlcNAc by the transfer of uridine 5-monophosphate (from uridine 5-triphosphate), a reaction catalyzed by the N-terminal domain. This Syntrophomonas wolfei subsp. wolfei (strain DSM 2245B / Goettingen) protein is Bifunctional protein GlmU.